Reading from the N-terminus, the 236-residue chain is V-set and transmembrane domain-containing protein 1 (236 aa).

The first 16 residues, 1–16 (MTAEFLSLLCLGLCLG), serve as a signal peptide directing secretion. Residues 17–135 (YEDEKKNEKP…APSMKTDTRT (119 aa)) lie on the Extracellular side of the membrane. Residues 27 to 114 (PKPSLHAWPS…EWSESSEHLQ (88 aa)) form the Ig-like V-type domain. Residues asparagine 44 and asparagine 55 are each glycosylated (N-linked (GlcNAc...) asparagine). Cysteine 49 and cysteine 96 are disulfide-bonded. Residues 136-156 (IFVAIFSCISILLLFLSVFII) traverse the membrane as a helical segment. The Cytoplasmic portion of the chain corresponds to 157 to 236 (YRCSQHSSSS…GSHEYAALKV (80 aa)). The disordered stretch occupies residues 166-200 (SEESTKRTSHSKLPEQEAAEADLSNMERVSLSTAD). Short sequence motifs (ITIM motif) lie at residues 204–209 (VTYAEL) and 229–234 (HEYAAL). Positions 215-236 (SEAASDTTQEPPGSHEYAALKV) are disordered.

Isoform 2 is N-glycosylated. As to expression, expressed on myeloid (neutrophils, eosinophils and monocytes) but not on lymphoid cells.

It is found in the membrane. The protein resides in the secreted. Behaves as a cytokine, promoting IL17A secretion by CD4+ T-cells, and differentiation and activation of IL17 producing helper T-cells (TH17). In terms of biological role, inhibitory immune receptor involved in the regulation of phagocytes. The sequence is that of V-set and transmembrane domain-containing protein 1 (VSTM1) from Homo sapiens (Human).